Here is a 479-residue protein sequence, read N- to C-terminus: Aspartyl/glutamyl-tRNA(Asn/Gln) amidotransferase subunit B (479 aa).

Belongs to the GatB/GatE family. GatB subfamily. Heterotrimer of A, B and C subunits.

The catalysed reaction is L-glutamyl-tRNA(Gln) + L-glutamine + ATP + H2O = L-glutaminyl-tRNA(Gln) + L-glutamate + ADP + phosphate + H(+). It carries out the reaction L-aspartyl-tRNA(Asn) + L-glutamine + ATP + H2O = L-asparaginyl-tRNA(Asn) + L-glutamate + ADP + phosphate + 2 H(+). Functionally, allows the formation of correctly charged Asn-tRNA(Asn) or Gln-tRNA(Gln) through the transamidation of misacylated Asp-tRNA(Asn) or Glu-tRNA(Gln) in organisms which lack either or both of asparaginyl-tRNA or glutaminyl-tRNA synthetases. The reaction takes place in the presence of glutamine and ATP through an activated phospho-Asp-tRNA(Asn) or phospho-Glu-tRNA(Gln). The protein is Aspartyl/glutamyl-tRNA(Asn/Gln) amidotransferase subunit B of Streptococcus pyogenes serotype M1.